We begin with the raw amino-acid sequence, 856 residues long: Phospholipase D gamma 2 (856 aa).

The C2 domain maps to 21-161; sequence PLATSSGSLM…CSGNRIEGLF (141 aa). Asp-223 contacts Ca(2+). Residues 362 to 397 enclose the PLD phosphodiesterase 1 domain; it reads TIYTHHQKTMIVDAEAAQNRRKIVAFVGGLDLCNGR. Catalysis depends on residues His-367, Lys-369, and Asp-374. Position 367 (His-367) interacts with a 1,2-diacyl-sn-glycero-3-phosphate. His-403 and His-435 together coordinate Ca(2+). A 1,2-diacyl-sn-glycero-3-phosphate-binding residues include Gln-562 and His-707. The PLD phosphodiesterase 2 domain occupies 702 to 729; the sequence is FMIYVHSKGMVVDDEFVLIGSANINQRS. Residues His-707, Lys-709, and Asp-714 contribute to the active site. Ca(2+) is bound at residue Glu-770.

The protein belongs to the phospholipase D family. C2-PLD subfamily. It depends on Ca(2+) as a cofactor. In terms of tissue distribution, highly expressed in roots and flowers, moderately in stems, leaves and seedlings and low in siliques. Not detected in seeds.

It is found in the cytoplasm. It localises to the membrane. It catalyses the reaction a 1,2-diacyl-sn-glycero-3-phosphocholine + H2O = a 1,2-diacyl-sn-glycero-3-phosphate + choline + H(+). With respect to regulation, inhibited by neomycin. In terms of biological role, hydrolyzes glycerol-phospholipids at the terminal phosphodiesteric bond to generate phosphatidic acids (PA). Plays an important role in various cellular processes, including phytohormone action, vesicular trafficking, secretion, cytoskeletal arrangement, meiosis, tumor promotion, pathogenesis, membrane deterioration and senescence. Can use phosphatidylserine but prefers ethanolamine-containing lipids as substrates. Can use phosphatidylcholine (PC) as substrates in the presence of phosphatidylethanolamine (PE) and PIP2. Involved in membrane lipid modulation under aluminum (Al) stress and negatively modulate plant tolerance to Al. The polypeptide is Phospholipase D gamma 2 (Arabidopsis thaliana (Mouse-ear cress)).